The primary structure comprises 2059 residues: Non-reducing polyketide synthase stmB (2059 aa).

A Starter acyltransferase (SAT) domain is found at 7–243; sequence LLFGDQTVEL…LKLAAYGAVH (237 aa). Residues 366 to 796 enclose the Ketosynthase family 3 (KS3) domain; it reads SNSIAIVGMA…GGNSCLILEE (431 aa). Active-site for beta-ketoacyl synthase activity residues include cysteine 538, histidine 673, and histidine 713. The Malonyl-CoA:ACP transacylase (MAT) domain occupies 895–1185; the sequence is WVFSGQGSQY…CGSMVKATLG (291 aa). The interval 1273-1413 is N-terminal hotdog fold; sequence LHFVKKETVT…SASEWTDEWS (141 aa). Residues 1273–1581 form the PKS/mFAS DH domain; sequence LHFVKKETVT…FQRMPRMVLH (309 aa). The active-site Proton acceptor; for dehydratase activity is histidine 1306. Residues 1435–1581 are C-terminal hotdog fold; it reads GDHLRRPVVY…FQRMPRMVLH (147 aa). The Proton donor; for dehydratase activity role is filled by aspartate 1495. The Carrier domain maps to 1619 to 1696; sequence PPKHDLADQL…DARRALGGDE (78 aa). Position 1656 is an O-(pantetheine 4'-phosphoryl)serine (serine 1656). The interval 1693–1727 is disordered; that stretch reads GGDETASESENDAEGDAPSDGGSPSGSWTPISPPE. Acidic residues predominate over residues 1697 to 1709; the sequence is TASESENDAEGDA. Low complexity predominate over residues 1710–1719; the sequence is PSDGGSPSGS. The tract at residues 1778–2059 is thioesterase (TE) domain; the sequence is AVEYKSNVVL…LGKLLQEAVA (282 aa).

Requires pantetheine 4'-phosphate as cofactor.

It participates in mycotoxin biosynthesis. In terms of biological role, non-reducing polyketide synthase; part of the gene cluster that mediates the biosynthesis of stromemycin, a depside C-glucoside with two unsaturated C9 side chains belonging to aromatic polyketide glycosides. The HR-PKS stmA and the NR-PKS stmB act as scaffold-generating enzymes responsible for the biosynthesis of the polyketide skeleton bininalkenylresorcylic acid. StmA condenses on acetyl-CoA starter unit with 4 malonyl-CoA units and the stmB uses 3 more malonyl-CoA units and catalyzes the depside bond formation. The glycoytransferase stmC then acts as the tailoring enzyme responsible for 3-C-glucosylation of bininalkenylresorcylic acid to yield stromemycin. The sequence is that of Non-reducing polyketide synthase stmB from Aspergillus ustus.